We begin with the raw amino-acid sequence, 202 residues long: LexA repressor (202 aa).

Positions 28 to 48 (RAEIAMRLGFRSPNAAEEHLK) form a DNA-binding region, H-T-H motif. Residues serine 119 and lysine 156 each act as for autocatalytic cleavage activity in the active site.

It belongs to the peptidase S24 family. Homodimer.

It carries out the reaction Hydrolysis of Ala-|-Gly bond in repressor LexA.. Represses a number of genes involved in the response to DNA damage (SOS response), including recA and lexA. Binds to the 16 bp palindromic sequence 5'-CTGTATATATATACAG-3'. In the presence of single-stranded DNA, RecA interacts with LexA causing an autocatalytic cleavage which disrupts the DNA-binding part of LexA, leading to derepression of the SOS regulon and eventually DNA repair. This Serratia proteamaculans (strain 568) protein is LexA repressor.